Reading from the N-terminus, the 1141-residue chain is DNA-directed RNA polymerase subunit beta (1141 aa).

The protein belongs to the RNA polymerase beta chain family. The RNAP catalytic core consists of 2 alpha, 1 beta, 1 beta' and 1 omega subunit. When a sigma factor is associated with the core the holoenzyme is formed, which can initiate transcription.

It catalyses the reaction RNA(n) + a ribonucleoside 5'-triphosphate = RNA(n+1) + diphosphate. In terms of biological role, DNA-dependent RNA polymerase catalyzes the transcription of DNA into RNA using the four ribonucleoside triphosphates as substrates. The sequence is that of DNA-directed RNA polymerase subunit beta from Frankia alni (strain DSM 45986 / CECT 9034 / ACN14a).